We begin with the raw amino-acid sequence, 524 residues long: Protein MGF 505-2R (524 aa).

The protein belongs to the asfivirus MGF 505 family.

In terms of biological role, plays a role in virus cell tropism, and may be required for efficient virus replication in macrophages. In Ornithodoros (relapsing fever ticks), this protein is Protein MGF 505-2R.